The primary structure comprises 476 residues: Probable serine carboxypeptidase CPVL (476 aa).

Residues 1 to 22 form the signal peptide; that stretch reads MVGTMWKVIVSLVLLMPGSCDG. Asn-81 and Asn-132 each carry an N-linked (GlcNAc...) asparagine glycan. Residue Ser-204 is part of the active site. N-linked (GlcNAc...) asparagine glycosylation is found at Asn-307 and Asn-346. Active-site residues include Asp-388 and His-448.

The protein belongs to the peptidase S10 family.

Its function is as follows. May be involved in the digestion of phagocytosed particles in the lysosome, participation in an inflammatory protease cascade, and trimming of peptides for antigen presentation. The sequence is that of Probable serine carboxypeptidase CPVL (CPVL) from Pongo abelii (Sumatran orangutan).